A 2235-amino-acid polypeptide reads, in one-letter code: Bridge-like lipid transfer protein family member 2 (2235 aa).

The first 31 residues, 1 to 31 (MPLFFSALLVLLLVALSALFLGRWLVVRLAT), serve as a signal peptide directing secretion. The transmembrane domain stretch occupies residues 29 to 108 (LATKWCQRKL…LQKVSDLSAP (80 aa)). Serine 563 is modified (phosphoserine). Asparagine 730 carries an N-linked (GlcNAc...) asparagine glycan. A disordered region spans residues 1495–1529 (PQMPAKKPKRGVPTSASAPPRVNTPSFSGQPDKGS). Positions 1813–1885 (SILHLQEAVR…LNILIRCFKD (73 aa)) form a coiled coil. Phosphoserine occurs at positions 1846, 2090, and 2094. Positions 2074 to 2099 (GKGVAQGLTRSSGVRRSFRKSPEHPV) are disordered.

The protein belongs to the SABRE family. As to expression, expressed in pancreas, placenta and up-regulated in breast carcinoma epithelial cells, ductal in situ carcinoma (DCIS), invasive breast carcinoma (IBC) and metastatic breast carcinoma cells (MET).

It is found in the cell membrane. The protein resides in the endoplasmic reticulum membrane. The protein localises to the mitochondrion membrane. Functionally, tube-forming lipid transport protein which binds to phosphatidylinositols and affects phosphatidylinositol-4,5-bisphosphate (PtdIns-4,5-P2) distribution. The chain is Bridge-like lipid transfer protein family member 2 from Homo sapiens (Human).